Here is a 243-residue protein sequence, read N- to C-terminus: 1-(5-phosphoribosyl)-5-[(5-phosphoribosylamino)methylideneamino] imidazole-4-carboxamide isomerase (243 aa).

Asp8 serves as the catalytic Proton acceptor. Asp130 functions as the Proton donor in the catalytic mechanism.

The protein belongs to the HisA/HisF family.

It localises to the cytoplasm. The catalysed reaction is 1-(5-phospho-beta-D-ribosyl)-5-[(5-phospho-beta-D-ribosylamino)methylideneamino]imidazole-4-carboxamide = 5-[(5-phospho-1-deoxy-D-ribulos-1-ylimino)methylamino]-1-(5-phospho-beta-D-ribosyl)imidazole-4-carboxamide. It participates in amino-acid biosynthesis; L-histidine biosynthesis; L-histidine from 5-phospho-alpha-D-ribose 1-diphosphate: step 4/9. The chain is 1-(5-phosphoribosyl)-5-[(5-phosphoribosylamino)methylideneamino] imidazole-4-carboxamide isomerase from Ruthia magnifica subsp. Calyptogena magnifica.